Consider the following 320-residue polypeptide: Putative GDP-polyphosphate phosphotransferase PKK2A (320 aa).

3 disordered regions span residues 1–21 (MRKK…PKLD), 246–267 (RPLP…PPRD), and 281–320 (EERI…KSKK). Over residues 12-21 (DFRKNPPKLD) the composition is skewed to basic and acidic residues. Basic and acidic residues predominate over residues 281-290 (EERIKKEEKA).

It belongs to the polyphosphate kinase 2 (PPK2) family. Class I subfamily.

It carries out the reaction [phosphate](n) + GTP = [phosphate](n+1) + GDP. This is Putative GDP-polyphosphate phosphotransferase PKK2A from Corynebacterium glutamicum (strain ATCC 13032 / DSM 20300 / JCM 1318 / BCRC 11384 / CCUG 27702 / LMG 3730 / NBRC 12168 / NCIMB 10025 / NRRL B-2784 / 534).